We begin with the raw amino-acid sequence, 237 residues long: Prospore formation at selected spindle poles protein 1 (237 aa).

Its subcellular location is the nucleus. The protein resides in the cytoplasm. It localises to the cytoskeleton. The protein localises to the microtubule organizing center. It is found in the spindle pole body. Involved in the pathway that organizes the shaping and sizing of the prospore membrane (PSM) during sporulation. Required to localize MPC54 to all four spindle pole bodies, and localize DON1 and SPO14 to four prospore membranes. In Saccharomyces cerevisiae (strain ATCC 204508 / S288c) (Baker's yeast), this protein is Prospore formation at selected spindle poles protein 1 (PFS1).